The following is a 247-amino-acid chain: uncharacterized protein (247 aa).

Positions 200-225 form a coiled coil; sequence SGKYSELKTKVNDIENDLRTLSSNTN.

This is an uncharacterized protein from Acanthamoeba polyphaga (Amoeba).